We begin with the raw amino-acid sequence, 221 residues long: Cutinase 3 (221 aa).

The first 17 residues, 1–17 (MRFHTILLAALASLVIA), serve as a signal peptide directing secretion. 2 cysteine pairs are disulfide-bonded: cysteine 44–cysteine 122 and cysteine 70–cysteine 84. Residue serine 133 is the Nucleophile of the active site. Cysteine 184 and cysteine 191 are disulfide-bonded. The active site involves aspartate 188. Histidine 201 (proton donor/acceptor) is an active-site residue.

Belongs to the cutinase family.

It is found in the secreted. The catalysed reaction is cutin + H2O = cutin monomers.. In terms of biological role, catalyzes the hydrolysis of complex carboxylic polyesters found in the cell wall of plants. Degrades cutin, a macromolecule that forms the structure of the plant cuticle. Also degrades suberin, a specialized macromolecule found in the cell wall of various plant tissues. This is Cutinase 3 from Emericella nidulans (strain FGSC A4 / ATCC 38163 / CBS 112.46 / NRRL 194 / M139) (Aspergillus nidulans).